A 1057-amino-acid polypeptide reads, in one-letter code: MDAAGRGCHLLPLPAARGPARAPAAAAAAAASPPGPCSGAACAPSAAAGAGAMNPSSSAGEEKGATGGSSSSGSGAGSCCLGAEGGADPRGAGSAAAAGAAALDEPAAAGQKEKDEALEEKLRNLTFRKQVSYRKAISRAGLQHLAPAHPLSLPVANGPAKEPRATLDWSENAVNGEHLWLETNVSGDLCYLGEENCQVRFAKSALRRKCAVCKIVVHTACIEQLEKINFRCKPTFREGGSRSPRENFVRHHWVHRRRQEGKCKQCGKGFQQKFSFHSKEIVAISCSWCKQAFHNKVTCFMLHHIEEPCSLGAHAAVIVPPTWIIKVKKPQNSLKASNRKKKRTSFKRKASKRGMEQENKGRPFVIKPISSPLMKPLLVFVNPKSGGNQGTKVLQMFMWYLNPRQVFDLSQEGPKDALELYRKVPNLRILACGGDGTVGWILSILDELQLSPQPPVGVLPLGTGNDLARTLNWGGGYTDEPVSKILCQVEDGTVVQLDRWNLHVERNPDLPPEELEDGVCKLPLNVFNNYFSLGFDAHVTLEFHESREANPEKFNSRFRNKMFYAGAAFSDFLQRSSRDLSKHVKVVCDGTDLTPKIQELKFQCIVFLNIPRYCAGTMPWGNPGDHHDFEPQRHDDGYIEVIGFTMASLAALQVGGHGERLHQCREVMLLTYKSIPMQVDGEPCRLAPAMIRISLRNQANMVQKSKRRTSMPLLNDPQSVPDRLRIRVNKISLQDYEGFHYDKEKLREASIPLGILVVRGDCDLETCRMYIDRLQEDLQSVSSGSQRVHYQDHETSFPRALSAQRLSPRWCFLDATSADRFYRIDRSQEHLHFVMEISQDEIFILDPDMVVSQPAGTPPGMPDLVVEQASGISDWWNPALRKRMLSDSGLGMIAPYYEDSDLKDLSHSRVLQSPVSSEDHAILQAVIAGDLMKLIESYKNGGSLLIQGPDHCSLLHYAAKTGNGEIVKYILDHGPSELLDMADSETGETALHKAACQRNRAVCQLLVDAGASLRKTDSKGKTPQERAQQAGDPDLAAYLESRQNYKVIGHEDLETAV.

The segment covering 15-59 (AARGPARAPAAAAAAAASPPGPCSGAACAPSAAAGAGAMNPSSSA) has biased composition (low complexity). 2 disordered regions span residues 15-74 (AARG…SSGS) and 334-358 (LKAS…MEQE). Residues 337–352 (SNRKKKRTSFKRKASK) show a composition bias toward basic residues. The DAGKc domain occupies 372–507 (PLMKPLLVFV…DRWNLHVERN (136 aa)). ANK repeat units follow at residues 950–979 (DHCS…SELL) and 986–1015 (TGET…SLRK). Over residues 1014-1024 (RKTDSKGKTPQ) the composition is skewed to basic and acidic residues. Residues 1014-1033 (RKTDSKGKTPQERAQQAGDP) are disordered. The PDZ-binding signature appears at 1055–1057 (TAV).

The protein belongs to the eukaryotic diacylglycerol kinase family. Interacts (via PDZ-binding motif) with DLG4; controls the localization of DGKI to the synapse. Interacts (via PDZ-binding motif) with DLG1. Interacts (via PDZ-binding motif) with DLG2. Interacts (via PDZ-binding motif) with DLG3. May interact with RASGRP3; involved in the regulation of RASGRP3 activity. As to expression, specifically expressed in brain and retina. In brain, highly expressed in hippocampus, caudate nucleus, occipital pole, cerebral cortex, and cerebellum. Also detected in kidney.

Its subcellular location is the cell projection. It localises to the axon. The protein localises to the dendrite. It is found in the presynapse. The protein resides in the postsynapse. Its subcellular location is the postsynaptic density. It localises to the synaptic cell membrane. The protein localises to the cytoplasmic vesicle. It is found in the secretory vesicle. The protein resides in the synaptic vesicle membrane. Its subcellular location is the cytoplasm. It localises to the cytosol. The protein localises to the nucleus. The enzyme catalyses a 1,2-diacyl-sn-glycerol + ATP = a 1,2-diacyl-sn-glycero-3-phosphate + ADP + H(+). The catalysed reaction is 1,2-di-(9Z-octadecenoyl)-sn-glycerol + ATP = 1,2-di-(9Z-octadecenoyl)-sn-glycero-3-phosphate + ADP + H(+). It carries out the reaction 1-octadecanoyl-2-(5Z,8Z,11Z,14Z-eicosatetraenoyl)-sn-glycerol + ATP = 1-octadecanoyl-2-(5Z,8Z,11Z,14Z-eicosatetraenoyl)-sn-glycero-3-phosphate + ADP + H(+). It catalyses the reaction 1-octadecanoyl-2-(9Z,12Z)-octadecadienoyl-sn-glycerol + ATP = 1-octadecanoyl-2-(9Z,12Z-octadecadienoyl)-sn-glycero-3-phosphate + ADP + H(+). Its pathway is lipid metabolism; glycerolipid metabolism. In terms of biological role, diacylglycerol kinase that converts diacylglycerol/DAG into phosphatidic acid/phosphatidate/PA and regulates the respective levels of these two bioactive lipids. Thereby, acts as a central switch between the signaling pathways activated by these second messengers with different cellular targets and opposite effects in numerous biological processes. Has probably no preference for any of the diacylglycerols in terms of the acyl chain composition, especially for the acyl chain at the sn-2 position. By controlling the diacylglycerol/DAG-mediated activation of RASGRP3, negatively regulates the Rap1 signaling pathway. May play a role in presynaptic diacylglycerol/DAG signaling and control neurotransmitter release during metabotropic glutamate receptor-dependent long-term depression. This Homo sapiens (Human) protein is Diacylglycerol kinase iota.